A 414-amino-acid polypeptide reads, in one-letter code: MTKNFLDPQLAKAVSGEEERQRHNIELVASENFVSKAVRQAQGSVLTNKYSEGYPGKRYYGGNEYIDIAENLAIERAKELFGVSYANVQPHSGSSANFEAYMAFLHPGDKILGMNLDSGGHLTHGASVSFSGKMYEAQSYKVDSETELLDYDAILKQAKEFKPNLIIAGASAYSRTIDFQAFRDIADEVNAYLMVDIAHIAGLIAAGLHPSPVGLADIITTTTHKTLRGPCGGMILADEKYAKRINSAVFPGSQGGPLDHVVAAKAAAFYEDLQPDFKTYSAQIIKNAKTMADAFSKEPDVRVVSGGTDNHMFTLDLTKTGLNGRQVQDLLDSVSITLNREALPNEKRSPFVTSGVRIGTPAMTTKGLKENEMLQIEHLIMRAIHAHDDKNELTKIKRDVFDLMDKFPFDSNPF.

(6S)-5,6,7,8-tetrahydrofolate contacts are provided by residues Leu-116 and Gly-120–Leu-122. N6-(pyridoxal phosphate)lysine is present on Lys-225. (6S)-5,6,7,8-tetrahydrofolate is bound at residue Ser-349 to Phe-351.

It belongs to the SHMT family. In terms of assembly, homodimer. Requires pyridoxal 5'-phosphate as cofactor.

It localises to the cytoplasm. The catalysed reaction is (6R)-5,10-methylene-5,6,7,8-tetrahydrofolate + glycine + H2O = (6S)-5,6,7,8-tetrahydrofolate + L-serine. It functions in the pathway one-carbon metabolism; tetrahydrofolate interconversion. Its pathway is amino-acid biosynthesis; glycine biosynthesis; glycine from L-serine: step 1/1. In terms of biological role, catalyzes the reversible interconversion of serine and glycine with tetrahydrofolate (THF) serving as the one-carbon carrier. This reaction serves as the major source of one-carbon groups required for the biosynthesis of purines, thymidylate, methionine, and other important biomolecules. Also exhibits THF-independent aldolase activity toward beta-hydroxyamino acids, producing glycine and aldehydes, via a retro-aldol mechanism. The protein is Serine hydroxymethyltransferase of Oenococcus oeni (strain ATCC BAA-331 / PSU-1).